Reading from the N-terminus, the 251-residue chain is uncharacterized protein (251 aa).

4 disordered regions span residues 1–93, 107–152, 169–188, and 224–251; these read MQPG…ASPG, GLRS…SRPQ, PSSILSAASPGAKLPRVSLS, and LQAQNLPSSGPLQARPRPRPHSGLSTPS. Polar residues predominate over residues 225 to 234; it reads QAQNLPSSGP.

This is an uncharacterized protein from Homo sapiens (Human).